The following is a 260-amino-acid chain: Adenosylcobinamide-GDP ribazoletransferase (260 aa).

7 consecutive transmembrane segments (helical) span residues 31 to 51, 57 to 77, 108 to 128, 131 to 151, 173 to 193, 206 to 226, and 240 to 260; these read FYFLPLIGGLIAGLVLIPIYF, IEISGFISLLLYLFLTGSIHL, YGTIGLNVFLLLRYINYSTII, AGLLILAGIISRLSGLAVVVF, FFFWLVLVCFLSLFTPEIAAF, LKYLLLPLTAFILTFIIIRIS, and LIVELTELAVLSTSFFINVHL.

The protein belongs to the CobS family. It depends on Mg(2+) as a cofactor.

It is found in the cell inner membrane. It carries out the reaction alpha-ribazole + adenosylcob(III)inamide-GDP = adenosylcob(III)alamin + GMP + H(+). It catalyses the reaction alpha-ribazole 5'-phosphate + adenosylcob(III)inamide-GDP = adenosylcob(III)alamin 5'-phosphate + GMP + H(+). The protein operates within cofactor biosynthesis; adenosylcobalamin biosynthesis; adenosylcobalamin from cob(II)yrinate a,c-diamide: step 7/7. Joins adenosylcobinamide-GDP and alpha-ribazole to generate adenosylcobalamin (Ado-cobalamin). Also synthesizes adenosylcobalamin 5'-phosphate from adenosylcobinamide-GDP and alpha-ribazole 5'-phosphate. The sequence is that of Adenosylcobinamide-GDP ribazoletransferase from Treponema denticola (strain ATCC 35405 / DSM 14222 / CIP 103919 / JCM 8153 / KCTC 15104).